A 172-amino-acid polypeptide reads, in one-letter code: uncharacterized protein (172 aa).

The region spanning 21-75 (FKRILLELGLTLKEFSEISGIPYSTLYKVIQGKDFRVSTLIKILKTIRSFEKDEN) is the HTH cro/C1-type domain. Positions 32–51 (LKEFSEISGIPYSTLYKVIQ) form a DNA-binding region, H-T-H motif.

This is an uncharacterized protein from Methanocaldococcus jannaschii (strain ATCC 43067 / DSM 2661 / JAL-1 / JCM 10045 / NBRC 100440) (Methanococcus jannaschii).